Here is a 378-residue protein sequence, read N- to C-terminus: uncharacterized protein (378 aa).

Cys-16 functions as the For GATase activity in the catalytic mechanism. One can recognise a Glutamine amidotransferase type-2 domain in the interval 16–378 (CGLFGVIDRS…ELAKQLSEVE (363 aa)).

This is an uncharacterized protein from Archaeoglobus fulgidus (strain ATCC 49558 / DSM 4304 / JCM 9628 / NBRC 100126 / VC-16).